A 66-amino-acid chain; its full sequence is Potassium channel toxin alpha-KTx (66 aa).

A signal peptide spans 1-21 (MNTKVVLIMLMITSVILVVEA). Intrachain disulfides connect Cys29/Cys49, Cys35/Cys59, Cys39/Cys61, and Cys44/Cys64.

The protein belongs to the short scorpion toxin superfamily. Potassium channel inhibitor family. In terms of tissue distribution, expressed by the venom gland.

Its subcellular location is the secreted. Its function is as follows. Blocks voltage-gated potassium channels. This is Potassium channel toxin alpha-KTx from Hoffmannihadrurus gertschi (Scorpion).